The following is a 350-amino-acid chain: Homoserine O-succinyltransferase (350 aa).

The active-site Acyl-thioester intermediate is the cysteine 146. Substrate-binding residues include lysine 167 and serine 196. The active-site Proton acceptor is the histidine 239. Glutamate 241 is an active-site residue. Arginine 253 contacts substrate.

Belongs to the MetA family.

Its subcellular location is the cytoplasm. The catalysed reaction is L-homoserine + succinyl-CoA = O-succinyl-L-homoserine + CoA. It participates in amino-acid biosynthesis; L-methionine biosynthesis via de novo pathway; O-succinyl-L-homoserine from L-homoserine: step 1/1. Functionally, transfers a succinyl group from succinyl-CoA to L-homoserine, forming succinyl-L-homoserine. The sequence is that of Homoserine O-succinyltransferase from Cardiobacterium hominis (strain ATCC 15826 / DSM 8339 / NCTC 10426 / 6573).